A 767-amino-acid chain; its full sequence is Phosphoribosylformylglycinamidine synthase subunit PurL (767 aa).

The active site involves His46. Positions 49 and 88 each coordinate ATP. A Mg(2+)-binding site is contributed by Glu90. Residues 91-94 (SHNH) and Arg113 each bind substrate. His92 functions as the Proton acceptor in the catalytic mechanism. Asp114 contributes to the Mg(2+) binding site. Residue Gln237 participates in substrate binding. Asp265 contacts Mg(2+). Residue 309-311 (ESQ) coordinates substrate. The ATP site is built by Asp498 and Gly535. A Mg(2+)-binding site is contributed by Asn536. Substrate is bound at residue Ser538.

This sequence belongs to the FGAMS family. In terms of assembly, monomer. Part of the FGAM synthase complex composed of 1 PurL, 1 PurQ and 2 PurS subunits.

The protein localises to the cytoplasm. It carries out the reaction N(2)-formyl-N(1)-(5-phospho-beta-D-ribosyl)glycinamide + L-glutamine + ATP + H2O = 2-formamido-N(1)-(5-O-phospho-beta-D-ribosyl)acetamidine + L-glutamate + ADP + phosphate + H(+). Its pathway is purine metabolism; IMP biosynthesis via de novo pathway; 5-amino-1-(5-phospho-D-ribosyl)imidazole from N(2)-formyl-N(1)-(5-phospho-D-ribosyl)glycinamide: step 1/2. In terms of biological role, part of the phosphoribosylformylglycinamidine synthase complex involved in the purines biosynthetic pathway. Catalyzes the ATP-dependent conversion of formylglycinamide ribonucleotide (FGAR) and glutamine to yield formylglycinamidine ribonucleotide (FGAM) and glutamate. The FGAM synthase complex is composed of three subunits. PurQ produces an ammonia molecule by converting glutamine to glutamate. PurL transfers the ammonia molecule to FGAR to form FGAM in an ATP-dependent manner. PurS interacts with PurQ and PurL and is thought to assist in the transfer of the ammonia molecule from PurQ to PurL. This Anaeromyxobacter sp. (strain Fw109-5) protein is Phosphoribosylformylglycinamidine synthase subunit PurL.